Reading from the N-terminus, the 297-residue chain is Syntaxin-4 (297 aa).

Residues 1–12 (MRDRTHELRQGD) show a composition bias toward basic and acidic residues. The disordered stretch occupies residues 1–21 (MRDRTHELRQGDDSSDEEDKE). The Cytoplasmic segment spans residues 1 to 275 (MRDRTHELRQ…QKKARKKKVL (275 aa)). A phosphoserine mark is found at Ser14 and Ser15. Thr31 is modified (phosphothreonine). Phosphoserine occurs at positions 36, 117, 208, and 248. A coiled-coil region spans residues 43–163 (HKVRTIRQTI…ERIRRQLKIT (121 aa)). The segment at 154–297 (ERIRRQLKIT…AVIIGVTVVG (144 aa)) is interaction with CENPF. Residues 200–262 (LNEISARHSE…ERGQEHVKTA (63 aa)) form the t-SNARE coiled-coil homology domain. Residues 276–296 (IAICVSITVVLLAVIIGVTVV) traverse the membrane as a helical; Anchor for type IV membrane protein segment. Gly297 is a topological domain (extracellular).

This sequence belongs to the syntaxin family. In terms of assembly, component of the SNARE complex composed of STX4, SNAP23 and VAMP7 that interacts with SYT7 during lysosomal exocytosis. Found in a complex with VAMP8 and SNAP23. Detected in a complex with SNAP23 and STXBP4. Interacts with VAMP2. Interacts with SNAP23 and SNAPIN. Interacts with LLGL1. Interacts (via C-terminus) with CENPF. Interacts with DOC2B. Interacts with STXBP6. Interacts with STXBP3; excludes interaction with DOC2B and SNAP25. Interacts with STXBP4; excludes interaction with VAMP2. Interacts with STXBP5L. In terms of tissue distribution, expressed in neutrophils and neutrophil-differentiated HL-60 cells. Expression in neutrophils increases with differentiation.

It is found in the cell membrane. Its subcellular location is the cell projection. The protein localises to the neuron projection. It localises to the stereocilium. Functionally, plasma membrane t-SNARE that mediates docking of transport vesicles. Necessary for the translocation of SLC2A4 from intracellular vesicles to the plasma membrane. In neurons, recruited at neurite tips to membrane domains rich in the phospholipid 1-oleoyl-2-palmitoyl-PC (OPPC) which promotes neurite tip surface expression of the dopamine transporter SLC6A3/DAT by facilitating fusion of SLC6A3-containing transport vesicles with the plasma membrane. Together with STXB3 and VAMP2, may also play a role in docking/fusion of intracellular GLUT4-containing vesicles with the cell surface in adipocytes and in docking of synaptic vesicles at presynaptic active zones. Required for normal hearing. The polypeptide is Syntaxin-4 (STX4) (Homo sapiens (Human)).